The chain runs to 2313 residues: Serine/threonine-protein kinase smg-1 (2313 aa).

A compositionally biased stretch (basic and acidic residues) spans 779–791 (NRKSSDKKPKSTT). The disordered stretch occupies residues 779-798 (NRKSSDKKPKSTTEDVPPPA). The FAT domain maps to 1045–1528 (ARERLQLVES…VFQVVSGAAS (484 aa)). The HEAT repeat unit spans residues 1478-1514 (VHVWKEILPQLFARLSHPSDHIRKTLVDLISRVCTAA). The 346-residue stretch at 1746–2091 (VADNVTILPT…DTIELFQLRV (346 aa)) folds into the PI3K/PI4K catalytic domain. Positions 1752 to 1758 (ILPTKTR) are G-loop. A catalytic loop region spans residues 1954–1962 (GLGDRHLDN). Residues 1974–1998 (HIDYNICFDKGKILRIPETVPFRLS) are activation loop. In terms of domain architecture, FATC spans 2281–2313 (RKLSPREEADVLIAEATSSANLAQMYEGWTAWV).

It belongs to the PI3/PI4-kinase family. As to quaternary structure, component of a post-splicing multiprotein NMD complex. Mn(2+) serves as cofactor.

Its subcellular location is the cytoplasm. The catalysed reaction is L-seryl-[protein] + ATP = O-phospho-L-seryl-[protein] + ADP + H(+). The enzyme catalyses L-threonyl-[protein] + ATP = O-phospho-L-threonyl-[protein] + ADP + H(+). Its function is as follows. Serine/threonine protein kinase involved in mRNA surveillance. Recognizes the substrate consensus sequence [ST]-Q. Involved in nonsense-mediated decay (NMD) of mRNAs containing premature stop codons by phosphorylating smg-2. In Caenorhabditis briggsae, this protein is Serine/threonine-protein kinase smg-1 (smg-1).